The primary structure comprises 391 residues: DNA replication and repair protein RecF (391 aa).

30-37 (GSNGQGKT) is a binding site for ATP.

The protein belongs to the RecF family.

Its subcellular location is the cytoplasm. The RecF protein is involved in DNA metabolism; it is required for DNA replication and normal SOS inducibility. RecF binds preferentially to single-stranded, linear DNA. It also seems to bind ATP. This Saccharopolyspora erythraea (strain ATCC 11635 / DSM 40517 / JCM 4748 / NBRC 13426 / NCIMB 8594 / NRRL 2338) protein is DNA replication and repair protein RecF.